We begin with the raw amino-acid sequence, 202 residues long: Imidazole glycerol phosphate synthase subunit HisH (202 aa).

The region spanning 3 to 202 (RIVIIDYGLG…KILKNFVEMC (200 aa)) is the Glutamine amidotransferase type-1 domain. The Nucleophile role is filled by cysteine 79. Residues histidine 183 and glutamate 185 contribute to the active site.

In terms of assembly, heterodimer of HisH and HisF.

It localises to the cytoplasm. It catalyses the reaction 5-[(5-phospho-1-deoxy-D-ribulos-1-ylimino)methylamino]-1-(5-phospho-beta-D-ribosyl)imidazole-4-carboxamide + L-glutamine = D-erythro-1-(imidazol-4-yl)glycerol 3-phosphate + 5-amino-1-(5-phospho-beta-D-ribosyl)imidazole-4-carboxamide + L-glutamate + H(+). The catalysed reaction is L-glutamine + H2O = L-glutamate + NH4(+). It functions in the pathway amino-acid biosynthesis; L-histidine biosynthesis; L-histidine from 5-phospho-alpha-D-ribose 1-diphosphate: step 5/9. IGPS catalyzes the conversion of PRFAR and glutamine to IGP, AICAR and glutamate. The HisH subunit catalyzes the hydrolysis of glutamine to glutamate and ammonia as part of the synthesis of IGP and AICAR. The resulting ammonia molecule is channeled to the active site of HisF. This is Imidazole glycerol phosphate synthase subunit HisH from Methanosarcina acetivorans (strain ATCC 35395 / DSM 2834 / JCM 12185 / C2A).